Consider the following 350-residue polypeptide: Anthranilate phosphoribosyltransferase (350 aa).

Residues glycine 88, 91-92 (GD), threonine 96, 98-101 (NIST), 116-124 (KHGGRSVSS), and serine 128 contribute to the 5-phospho-alpha-D-ribose 1-diphosphate site. Glycine 88 contributes to the anthranilate binding site. A Mg(2+)-binding site is contributed by serine 100. Arginine 174 is a binding site for anthranilate. Mg(2+) is bound by residues aspartate 233 and glutamate 234.

The protein belongs to the anthranilate phosphoribosyltransferase family. In terms of assembly, homodimer. Mg(2+) serves as cofactor.

The enzyme catalyses N-(5-phospho-beta-D-ribosyl)anthranilate + diphosphate = 5-phospho-alpha-D-ribose 1-diphosphate + anthranilate. Its pathway is amino-acid biosynthesis; L-tryptophan biosynthesis; L-tryptophan from chorismate: step 2/5. In terms of biological role, catalyzes the transfer of the phosphoribosyl group of 5-phosphorylribose-1-pyrophosphate (PRPP) to anthranilate to yield N-(5'-phosphoribosyl)-anthranilate (PRA). The chain is Anthranilate phosphoribosyltransferase from Albidiferax ferrireducens (strain ATCC BAA-621 / DSM 15236 / T118) (Rhodoferax ferrireducens).